We begin with the raw amino-acid sequence, 540 residues long: MADISTTQAWQDLTDHYSNFQATTLRELFKEENRAEKYTFSAAGLHVDLSKNLLDDATLTKLLALTEESGLRERIDAMFAGEHLNNTEDRAVLHTALRLPAEADLSVDGQDVAADVHEVLGRMRDFATALRSGNWLGYTGHTIKKIVNIGIGGSDLGPAMATKALRAYATAGISAEFVSNVDPADLVSVLEDLDAESTLFVVASKTFTTQETLSNARAARAWLVEKLGEEAVAKHFVAVSTNAEKVAEFGIDTDNMFGFWDWVGGRYSVDSAVGLSLMAVIGPRDFMRFLGGFHAMDEHFRTTKFEENVPILMALLGVWYSDFYGAETHAVLPYSEDLSRFAAYLQQLTMESNGKSVHRDGSPVSTGTGEIYWGEPGTNGQHAFFQLIHQGTRLVPADFIGFARPKQDLPAGERTMHDLLMSNFFAQTKVLAFGKNAEEIAAEGVAPELVNHKVMPGNRPTTTILAEELTPSILGALIALYEHIVMVQGVIWDINSFDQWGVELGKQQANDLAPAVSGEEDVDSGDSSTDSLIKWYRANR.

The active-site Proton donor is the Glu351. Catalysis depends on residues His382 and Lys506.

It belongs to the GPI family.

The protein localises to the cytoplasm. It carries out the reaction alpha-D-glucose 6-phosphate = beta-D-fructose 6-phosphate. It participates in carbohydrate biosynthesis; gluconeogenesis. It functions in the pathway carbohydrate degradation; glycolysis; D-glyceraldehyde 3-phosphate and glycerone phosphate from D-glucose: step 2/4. Its function is as follows. Catalyzes the reversible isomerization of glucose-6-phosphate to fructose-6-phosphate. The chain is Glucose-6-phosphate isomerase from Corynebacterium glutamicum (strain R).